Reading from the N-terminus, the 191-residue chain is Ion-translocating oxidoreductase complex subunit B (191 aa).

The hydrophobic stretch occupies residues 1–26 (MSLVLVAVLALLGLCLIAGAILGFAA). The 59-residue stretch at 32–90 (EGDPIAEQINALLPQTQCGQCGYPGCKPYAEAIAGGDKINKCPPGGEATIQALADLLDV) folds into the 4Fe-4S domain. Positions 49, 52, 57, 73, 114, 117, 120, 124, 144, 147, 150, and 154 each coordinate [4Fe-4S] cluster. 4Fe-4S ferredoxin-type domains are found at residues 105–134 (MVAFIREAECIGCTKCIQACPVDAIVGAAR) and 135–164 (QMHTVIVSECTGCDLCVEPCPVDCIDMIEV).

It belongs to the 4Fe4S bacterial-type ferredoxin family. RnfB subfamily. In terms of assembly, the complex is composed of six subunits: RnfA, RnfB, RnfC, RnfD, RnfE and RnfG. Requires [4Fe-4S] cluster as cofactor.

The protein resides in the cell inner membrane. Its function is as follows. Part of a membrane-bound complex that couples electron transfer with translocation of ions across the membrane. This chain is Ion-translocating oxidoreductase complex subunit B, found in Ectopseudomonas mendocina (strain ymp) (Pseudomonas mendocina).